Consider the following 159-residue polypeptide: Aspartate carbamoyltransferase regulatory chain (159 aa).

Zn(2+) contacts are provided by Cys-108, Cys-113, Cys-138, and Cys-141.

It belongs to the PyrI family. As to quaternary structure, contains catalytic and regulatory chains. Zn(2+) is required as a cofactor.

In terms of biological role, involved in allosteric regulation of aspartate carbamoyltransferase. The protein is Aspartate carbamoyltransferase regulatory chain of Thermofilum pendens (strain DSM 2475 / Hrk 5).